Consider the following 781-residue polypeptide: LPS-assembly protein LptD (781 aa).

Positions 1 to 24 are cleaved as a signal peptide; sequence MKKNYYTVLSLSILTALYSTSSQA.

Belongs to the LptD family. Component of the lipopolysaccharide transport and assembly complex. Interacts with LptE and LptA.

The protein resides in the cell outer membrane. Together with LptE, is involved in the assembly of lipopolysaccharide (LPS) at the surface of the outer membrane. This chain is LPS-assembly protein LptD, found in Histophilus somni (strain 129Pt) (Haemophilus somnus).